The sequence spans 134 residues: Phosphoribosyl-ATP pyrophosphatase (134 aa).

Belongs to the PRA-PH family.

It is found in the cytoplasm. The enzyme catalyses 1-(5-phospho-beta-D-ribosyl)-ATP + H2O = 1-(5-phospho-beta-D-ribosyl)-5'-AMP + diphosphate + H(+). Its pathway is amino-acid biosynthesis; L-histidine biosynthesis; L-histidine from 5-phospho-alpha-D-ribose 1-diphosphate: step 2/9. This Verminephrobacter eiseniae (strain EF01-2) protein is Phosphoribosyl-ATP pyrophosphatase.